A 279-amino-acid chain; its full sequence is MTARMDKRFAELKAEGRPALVTYFMGGDPDYDTSLGIMKALPEAGSDIIELGMPFSDPMADGPAIQLAGQRALKGGQTLKKTLQLAADFRKTNDATPIVMMGYYNPIYIYGVEKFLDDALLAGIDGLIVVDLPPEMDDELCIPAIRKGINFIRLATPTTDEKRLPKVLKNTSGFVYYVSMNGITGSALPDPSLVSGAVERIKQHTKLPVCVGFGVKTAEHAKVIGGSADGVVVGTAIVNQVATSLTHDGKATADTVQAVATLVRGLSTGTRSARLVAAE.

Residues E50 and D61 each act as proton acceptor in the active site.

Belongs to the TrpA family. As to quaternary structure, tetramer of two alpha and two beta chains.

It carries out the reaction (1S,2R)-1-C-(indol-3-yl)glycerol 3-phosphate + L-serine = D-glyceraldehyde 3-phosphate + L-tryptophan + H2O. It participates in amino-acid biosynthesis; L-tryptophan biosynthesis; L-tryptophan from chorismate: step 5/5. In terms of biological role, the alpha subunit is responsible for the aldol cleavage of indoleglycerol phosphate to indole and glyceraldehyde 3-phosphate. The protein is Tryptophan synthase alpha chain of Rhizobium johnstonii (strain DSM 114642 / LMG 32736 / 3841) (Rhizobium leguminosarum bv. viciae).